We begin with the raw amino-acid sequence, 311 residues long: Olfactory receptor 10G8 (311 aa).

Topologically, residues 1–23 are extracellular; the sequence is MSNASLLTAFILMGLPHAPALDA. Residue N3 is glycosylated (N-linked (GlcNAc...) asparagine). A helical transmembrane segment spans residues 24 to 44; it reads PLFGVFLVVYVLTVLGNLLIL. Topologically, residues 45-52 are cytoplasmic; that stretch reads LVIRVDSH. Residues 53–73 form a helical membrane-spanning segment; that stretch reads LHTTMYYFLTNLSFIDMWFST. The Extracellular segment spans residues 74–98; the sequence is VTVPKLLMTLVFPSGRAISFHSCMA. A disulfide bridge connects residues C96 and C188. A helical transmembrane segment spans residues 99 to 119; the sequence is QLYFFHFLGGTECFLYRVMSC. Residues 120 to 138 are Cytoplasmic-facing; that stretch reads DRYLAISYPLRYTSMMTGR. Residues 139-159 traverse the membrane as a helical segment; sequence SCTLLATSTWLSGSLHSAVQA. Residues 160 to 196 lie on the Extracellular side of the membrane; sequence ILTFHLPYCGPNWIQHYLCDAPPILKLACADTSAIET. A helical transmembrane segment spans residues 197 to 216; that stretch reads VIFVTVGIVASGCFVLIVLS. At 217–236 the chain is on the cytoplasmic side; it reads YVSIVCSILRIRTSEGKHRA. Residues 237-257 form a helical membrane-spanning segment; it reads FQTCASHCIVVLCFFGPGLFI. Topologically, residues 258 to 268 are extracellular; it reads YLRPGSRKAVD. Residues 269–289 form a helical membrane-spanning segment; sequence GVVAVFYTVLTPLLNPVVYTL. The Cytoplasmic portion of the chain corresponds to 290–311; it reads RNKEVKKALLKLKDKVAHSQSK.

It belongs to the G-protein coupled receptor 1 family.

The protein localises to the cell membrane. Its function is as follows. Odorant receptor. The protein is Olfactory receptor 10G8 (OR10G8) of Homo sapiens (Human).